A 135-amino-acid polypeptide reads, in one-letter code: DNA-directed RNA polymerase subunit omega (135 aa).

The protein belongs to the RNA polymerase subunit omega family. In terms of assembly, the RNAP catalytic core consists of 2 alpha, 1 beta, 1 beta' and 1 omega subunit. When a sigma factor is associated with the core the holoenzyme is formed, which can initiate transcription.

It catalyses the reaction RNA(n) + a ribonucleoside 5'-triphosphate = RNA(n+1) + diphosphate. In terms of biological role, promotes RNA polymerase assembly. Latches the N- and C-terminal regions of the beta' subunit thereby facilitating its interaction with the beta and alpha subunits. This is DNA-directed RNA polymerase subunit omega from Rhizobium meliloti (strain 1021) (Ensifer meliloti).